The primary structure comprises 150 residues: Transcriptional regulator MraZ (150 aa).

SpoVT-AbrB domains follow at residues 5–52 (VTHL…PLPD) and 81–124 (AHDL…DAEA).

Belongs to the MraZ family. Forms oligomers.

It localises to the cytoplasm. The protein localises to the nucleoid. The protein is Transcriptional regulator MraZ of Alkalilimnicola ehrlichii (strain ATCC BAA-1101 / DSM 17681 / MLHE-1).